Here is a 45-residue protein sequence, read N- to C-terminus: Lysis protein for colicin E1 (45 aa).

The first 17 residues, 1–17, serve as a signal peptide directing secretion; sequence MRKRFFVGIFAINLLVG. C18 is lipidated: N-palmitoyl cysteine. The S-diacylglycerol cysteine moiety is linked to residue C18.

Its subcellular location is the cell outer membrane. Lysis proteins are required for both colicin release and partial cell lysis. In Escherichia coli, this protein is Lysis protein for colicin E1 (lys).